The following is a 222-amino-acid chain: Type II restriction enzyme MjaI (222 aa).

The catalysed reaction is Endonucleolytic cleavage of DNA to give specific double-stranded fragments with terminal 5'-phosphates.. In terms of biological role, a P subtype restriction enzyme that recognizes the double-stranded sequence 5'-CTAG-3'; the cleavage site is unknown. In Methanocaldococcus jannaschii (strain ATCC 43067 / DSM 2661 / JAL-1 / JCM 10045 / NBRC 100440) (Methanococcus jannaschii), this protein is Type II restriction enzyme MjaI (mjaIR).